Reading from the N-terminus, the 239-residue chain is RNA chaperone ProQ (239 aa).

Residues lysine 107–alanine 177 form a disordered region. The span at alanine 115–threonine 137 shows a compositional bias: basic and acidic residues.

Belongs to the ProQ family.

It is found in the cytoplasm. RNA chaperone with significant RNA binding, RNA strand exchange and RNA duplexing activities. May regulate ProP activity through an RNA-based, post-transcriptional mechanism. The polypeptide is RNA chaperone ProQ (Photorhabdus laumondii subsp. laumondii (strain DSM 15139 / CIP 105565 / TT01) (Photorhabdus luminescens subsp. laumondii)).